The sequence spans 109 residues: Stress-response A/B barrel domain-containing protein HS1 (109 aa).

The region spanning 8 to 102 is the Stress-response A/B barrel domain; it reads VKHVLLASFK…SLDKVLVIDY (95 aa). Val-36, Ile-39, Glu-40, and Met-42 together coordinate Mg(2+).

In terms of assembly, homodimer. Mg(2+) is required as a cofactor.

Its function is as follows. Heat stable protein involved in defense against fungal pathogens. Possesses antifungal activity against diverse pathogenic fungi. Possesses antimicrobial activity. Possesses ribonuclease activity. The protein is Stress-response A/B barrel domain-containing protein HS1 of Arabidopsis thaliana (Mouse-ear cress).